The sequence spans 394 residues: MGCLGNSKTEDQRNEEKAQREANKKIEKQLQKDKQVYRATHRLLLLGAGESGKSTIVKQMRILHVNGFNGEGGEEDPQAARSNSDGEKATKVQDIKNNLKEAIETIVAAMSNLVPPVELANPENQFRVDYILSVMNVPDFDFPPEFYEHAKALWEDEGVRACYERSNEYQLIDCAQYFLDKIDVIKQDDYVPSDQDLLRCRVLTSGIFETKFQVDKVNFHMFDVGGQRDERRKWIQCFNDVTAIIFVVASSSYNMVIREDNQTNRLQEALNLFKSIWNNRWLRTISVILFLNKQDLLAEKVLAGKSKIEDYFPEFARYTTPEDATPEPGEDPRVTRAKYFIRDEFLRISTASGDGRHYCYPHFTCAVDTENIRRVFNDCRDIIQRMHLRQYELL.

The tract at residues 1 to 23 (MGCLGNSKTEDQRNEEKAQREAN) is disordered. Residue Gly-2 is the site of N-palmitoyl glycine attachment. Cys-3 carries S-palmitoyl cysteine lipidation. Over residues 8–23 (KTEDQRNEEKAQREAN) the composition is skewed to basic and acidic residues. Residues 39-394 (ATHRLLLLGA…RMHLRQYELL (356 aa)) form the G-alpha domain. The segment at 42–55 (RLLLLGAGESGKST) is G1 motif. 47–55 (GAGESGKST) provides a ligand contact to GTP. Ser-54 is a Mg(2+) binding site. The segment at 68–91 (FNGEGGEEDPQAARSNSDGEKATK) is disordered. The interval 196–204 (DLLRCRVLT) is G2 motif. GTP is bound by residues 197 to 204 (LLRCRVLT), 223 to 227 (DVGGQ), and 292 to 295 (NKQD). Thr-204 provides a ligand contact to Mg(2+). Positions 219 to 228 (FHMFDVGGQR) are G3 motif. The segment at 288-295 (ILFLNKQD) is G4 motif. Lys-300 participates in a covalent cross-link: Glycyl lysine isopeptide (Lys-Gly) (interchain with G-Cter in ubiquitin). A Phosphoserine modification is found at Ser-352. Residues 364-369 (TCAVDT) are G5 motif. Ala-366 lines the GTP pocket.

Belongs to the G-alpha family. G(s) subfamily. Heterotrimeric G proteins are composed of 3 units; alpha, beta and gamma. The alpha chain contains the guanine nucleotide binding site. Component of the TAS2R14-GNAS2 complex, consisting of TAS2R14, GNAS2, GNB1 and GNG2; within the complex interacts with TAS2R14; this complex plays a role in the perception of bitterness. Interacts with CRY1; the interaction may block GPCR-mediated regulation of cAMP concentrations. Interacts with ADCY6 and stimulates its adenylyl cyclase activity. Interacts with ADCY2 and ADCY5. Stimulates the ADCY5 adenylyl cyclase activity. Interacts (GDP-bound form) with RIC8B; promoting GNAS folding and association with the plasma membrane. Interaction with SASH1. Interacts with GASL2L2.

The protein localises to the cell membrane. The catalysed reaction is GTP + H2O = GDP + phosphate + H(+). Functionally, guanine nucleotide-binding proteins (G proteins) function as transducers in numerous signaling pathways controlled by G protein-coupled receptors (GPCRs). The alpha chain contains the guanine nucleotide binding site and alternates between an active, GTP-bound state and an inactive, GDP-bound state. Signaling by an activated GPCR promotes GDP release and GTP binding. The alpha subunit has a low GTPase activity that converts bound GTP to GDP, thereby terminating the signal. Both GDP release and GTP hydrolysis are modulated by numerous regulatory proteins. Signaling involves the activation of adenylyl cyclases, resulting in increased levels of the signaling molecule cAMP. Functions downstream of beta-adrenergic receptors. Stimulates the Ras signaling pathway via RAPGEF2. This chain is Guanine nucleotide-binding protein G(s) subunit alpha isoforms short (GNAS), found in Bos taurus (Bovine).